Here is a 74-residue protein sequence, read N- to C-terminus: Kappa-scoloptoxin(07)-Ssm2a (74 aa).

The N-terminal stretch at 1–19 (MLVFYALLFVTVFSNTVMG) is a signal peptide. Residues 20-41 (ATIDKPIPKPILREAIEEIEVN) constitute a propeptide that is removed on maturation.

The protein belongs to the scoloptoxin-07 family. In terms of processing, contains 3 disulfide bonds. As to expression, expressed by the venom gland.

It localises to the secreted. Functionally, toxin that inhibits voltage-gated potassium channel currents in DRG neurons (IC(50)=about 570 nM). In vivo, induces neurotoxicity shown by twitching, paralysis, and body contraction. In vivo, insects injected with this toxin showed signs of neurotoxicity including twitching, paralysis, and body contraction. The polypeptide is Kappa-scoloptoxin(07)-Ssm2a (Scolopendra mutilans (Chinese red-headed centipede)).